The chain runs to 531 residues: MLSKALFFSSLPLWAKVASAAFGITTTDSSYTIDAGSPNPLKFTVSRSSCDITSINYYGSELQYQSKGSHIGSGLGSASVSAVQNGDYIKVTCDTDTLTHYFVVHSGDPIIHMATYITAEPSIGELRFIARLNSNLLPNEEPFGDVSTTAGGSAIEGSDVFLVNGQTRSKFYSSQRFIDDQRHCISGSAHRVCMILNQYESSSGGPFHRDINSNNGGDYNSLYWYMNSGHVQTESYRMGLHGPYSMYFSRSGTPGTNIDTSFFANLDIKGYVPASGRGTVTGKASGADSNFKWVVHWYNDAAQYWTYTASDGSFTSPAMKPGTYTMAYYQGEYRVAETSVTVSAGSSTTKNISGSVKTGTTIFKIGDWDGQPTGFLNADKQLRMHPSDSRMSSWGPVTYTVGSSSVGSFPMALFKSVNSPVTIKFTATSAQTGAATLRIGTTLSFAGGRPQATINSYTGPTPSAPTNLNSRGVTRGAYRGLGEVYDVSIPAGTIVAGTNTITINVISGSSGDDFLSPNFVSAYPFLTLMRC.

The N-terminal stretch at 1-20 (MLSKALFFSSLPLWAKVASA) is a signal peptide. 2 disulfide bridges follow: Cys50-Cys93 and Cys184-Cys193. The N-linked (GlcNAc...) asparagine glycan is linked to Asn351.

The protein belongs to the polysaccharide lyase 4 family.

The protein localises to the secreted. It carries out the reaction Endotype eliminative cleavage of L-alpha-rhamnopyranosyl-(1-&gt;4)-alpha-D-galactopyranosyluronic acid bonds of rhamnogalacturonan I domains in ramified hairy regions of pectin leaving L-rhamnopyranose at the reducing end and 4-deoxy-4,5-unsaturated D-galactopyranosyluronic acid at the non-reducing end.. Pectinolytic enzymes consist of four classes of enzymes: pectin lyase, polygalacturonase, pectin methylesterase and rhamnogalacturonase. Degrades the rhamnogalacturonan I (RG-I) backbone of pectin. This Aspergillus terreus (strain NIH 2624 / FGSC A1156) protein is Probable rhamnogalacturonate lyase A (rglA).